The primary structure comprises 361 residues: Ribosomal RNA large subunit methyltransferase M (361 aa).

S-adenosyl-L-methionine contacts are provided by residues S187, 220–223 (CPGG), D239, D259, and D276. K305 acts as the Proton acceptor in catalysis.

Belongs to the class I-like SAM-binding methyltransferase superfamily. RNA methyltransferase RlmE family. RlmM subfamily. Monomer.

It localises to the cytoplasm. The enzyme catalyses cytidine(2498) in 23S rRNA + S-adenosyl-L-methionine = 2'-O-methylcytidine(2498) in 23S rRNA + S-adenosyl-L-homocysteine + H(+). In terms of biological role, catalyzes the 2'-O-methylation at nucleotide C2498 in 23S rRNA. The sequence is that of Ribosomal RNA large subunit methyltransferase M from Shewanella putrefaciens (strain CN-32 / ATCC BAA-453).